Here is a 98-residue protein sequence, read N- to C-terminus: HssA/B-like protein 39 (98 aa).

The disordered stretch occupies residues 1–21; it reads MTLFSSISSMSTSMSGSKSSI.

This sequence belongs to the hssA/B family.

This chain is HssA/B-like protein 39 (hssl39), found in Dictyostelium discoideum (Social amoeba).